A 346-amino-acid polypeptide reads, in one-letter code: MGDRLLRAARGEVLDRPPVWMMRQAGRYMAAYRELQSKYTFKQRCEIPELAVEISLQPFRAFAPDGVILFSDILTPLEGMGIPFELVEHQGPIIDPPIRSQAQIERIRLLEPEESLPFIKTILSTLRREVEGKATLLGFVGSPWTLACYAVEGRSSKDYAHIKSLAFAQPPLLHQLLSKLADSIARYVIYQIEGGAQVVQLFDTWAGQLSPVDYECWALPYQKQIVDQVKARYPQVPLILYINGSAALLERVGKAGIDVFSLDWMSDMAEARARLGSLAVQGNLDPMVLLGSPEFIRQRTLEVIRKAGSRGHIMNLGHGIHPSTPEANVHYFFETVRQSAELIHLR.

Residues 23 to 27, aspartate 72, tyrosine 149, threonine 204, and histidine 318 each bind substrate; that span reads RQAGR.

This sequence belongs to the uroporphyrinogen decarboxylase family. Homodimer.

The protein resides in the cytoplasm. It catalyses the reaction uroporphyrinogen III + 4 H(+) = coproporphyrinogen III + 4 CO2. It participates in porphyrin-containing compound metabolism; protoporphyrin-IX biosynthesis; coproporphyrinogen-III from 5-aminolevulinate: step 4/4. In terms of biological role, catalyzes the decarboxylation of four acetate groups of uroporphyrinogen-III to yield coproporphyrinogen-III. The protein is Uroporphyrinogen decarboxylase of Synechococcus sp. (strain JA-2-3B'a(2-13)) (Cyanobacteria bacterium Yellowstone B-Prime).